The sequence spans 240 residues: Coatomer subunit delta (240 aa).

Residues 215 to 226 (AAAKASSAPKAK) show a composition bias toward low complexity. Residues 215 to 240 (AAAKASSAPKAKGMQLGKKKNTSLLY) form a disordered region. A compositionally biased stretch (basic residues) spans 231-240 (GKKKNTSLLY).

This sequence belongs to the adaptor complexes medium subunit family. Delta-COP subfamily. Oligomeric complex that consists of at least the alpha, beta, beta', gamma, delta, epsilon and zeta subunits.

The protein localises to the cytoplasm. It localises to the nucleus. In terms of biological role, the coatomer is a cytosolic protein complex that binds to dilysine motifs and reversibly associates with Golgi non-clathrin-coated vesicles, which further mediate biosynthetic protein transport from the ER, via the Golgi up to the trans Golgi network. Coatomer complex is required for budding from Golgi membranes, and is essential for the retrograde Golgi-to-ER transport of dilysine-tagged proteins. This is Coatomer subunit delta (ret2) from Schizosaccharomyces pombe (strain 972 / ATCC 24843) (Fission yeast).